Reading from the N-terminus, the 236-residue chain is Ubiquinone biosynthesis O-methyltransferase (236 aa).

Residues arginine 39, glycine 59, aspartate 80, and methionine 124 each contribute to the S-adenosyl-L-methionine site.

The protein belongs to the methyltransferase superfamily. UbiG/COQ3 family.

The enzyme catalyses a 3-demethylubiquinol + S-adenosyl-L-methionine = a ubiquinol + S-adenosyl-L-homocysteine + H(+). The catalysed reaction is a 3-(all-trans-polyprenyl)benzene-1,2-diol + S-adenosyl-L-methionine = a 2-methoxy-6-(all-trans-polyprenyl)phenol + S-adenosyl-L-homocysteine + H(+). It participates in cofactor biosynthesis; ubiquinone biosynthesis. Functionally, O-methyltransferase that catalyzes the 2 O-methylation steps in the ubiquinone biosynthetic pathway. In Shewanella sp. (strain W3-18-1), this protein is Ubiquinone biosynthesis O-methyltransferase.